Consider the following 231-residue polypeptide: Large ribosomal subunit protein uL3 (231 aa).

Glutamine 151 is modified (N5-methylglutamine).

It belongs to the universal ribosomal protein uL3 family. In terms of assembly, part of the 50S ribosomal subunit. Forms a cluster with proteins L14 and L19. In terms of processing, methylated by PrmB.

Its function is as follows. One of the primary rRNA binding proteins, it binds directly near the 3'-end of the 23S rRNA, where it nucleates assembly of the 50S subunit. In Granulibacter bethesdensis (strain ATCC BAA-1260 / CGDNIH1), this protein is Large ribosomal subunit protein uL3.